Here is a 234-residue protein sequence, read N- to C-terminus: Large ribosomal subunit protein uL1 (234 aa).

This sequence belongs to the universal ribosomal protein uL1 family. Part of the 50S ribosomal subunit.

In terms of biological role, binds directly to 23S rRNA. The L1 stalk is quite mobile in the ribosome, and is involved in E site tRNA release. Its function is as follows. Protein L1 is also a translational repressor protein, it controls the translation of the L11 operon by binding to its mRNA. The protein is Large ribosomal subunit protein uL1 of Sodalis glossinidius (strain morsitans).